We begin with the raw amino-acid sequence, 292 residues long: 33 kDa chaperonin (292 aa).

Intrachain disulfides connect C230/C232 and C263/C266.

This sequence belongs to the HSP33 family. Post-translationally, under oxidizing conditions two disulfide bonds are formed involving the reactive cysteines. Under reducing conditions zinc is bound to the reactive cysteines and the protein is inactive.

The protein resides in the cytoplasm. Redox regulated molecular chaperone. Protects both thermally unfolding and oxidatively damaged proteins from irreversible aggregation. Plays an important role in the bacterial defense system toward oxidative stress. This Salmonella typhi protein is 33 kDa chaperonin.